A 196-amino-acid polypeptide reads, in one-letter code: Imidazole glycerol phosphate synthase subunit HisH (196 aa).

Residues 2–196 (KVVILDTGCA…AQLLKNFLEM (195 aa)) form the Glutamine amidotransferase type-1 domain. Cysteine 77 acts as the Nucleophile in catalysis. Catalysis depends on residues histidine 178 and glutamate 180.

In terms of assembly, heterodimer of HisH and HisF.

The protein resides in the cytoplasm. It carries out the reaction 5-[(5-phospho-1-deoxy-D-ribulos-1-ylimino)methylamino]-1-(5-phospho-beta-D-ribosyl)imidazole-4-carboxamide + L-glutamine = D-erythro-1-(imidazol-4-yl)glycerol 3-phosphate + 5-amino-1-(5-phospho-beta-D-ribosyl)imidazole-4-carboxamide + L-glutamate + H(+). The enzyme catalyses L-glutamine + H2O = L-glutamate + NH4(+). It participates in amino-acid biosynthesis; L-histidine biosynthesis; L-histidine from 5-phospho-alpha-D-ribose 1-diphosphate: step 5/9. Its function is as follows. IGPS catalyzes the conversion of PRFAR and glutamine to IGP, AICAR and glutamate. The HisH subunit catalyzes the hydrolysis of glutamine to glutamate and ammonia as part of the synthesis of IGP and AICAR. The resulting ammonia molecule is channeled to the active site of HisF. This Pectobacterium atrosepticum (strain SCRI 1043 / ATCC BAA-672) (Erwinia carotovora subsp. atroseptica) protein is Imidazole glycerol phosphate synthase subunit HisH.